The chain runs to 74 residues: Sec-independent protein translocase protein TatA (74 aa).

The helical transmembrane segment at 1–21 (MGSFSIWHWLIVLLIVVLVFG) threads the bilayer.

Belongs to the TatA/E family. In terms of assembly, the Tat system comprises two distinct complexes: a TatABC complex, containing multiple copies of TatA, TatB and TatC subunits, and a separate TatA complex, containing only TatA subunits. Substrates initially bind to the TatABC complex, which probably triggers association of the separate TatA complex to form the active translocon.

Its subcellular location is the cell inner membrane. Functionally, part of the twin-arginine translocation (Tat) system that transports large folded proteins containing a characteristic twin-arginine motif in their signal peptide across membranes. TatA could form the protein-conducting channel of the Tat system. The chain is Sec-independent protein translocase protein TatA from Nitrosospira multiformis (strain ATCC 25196 / NCIMB 11849 / C 71).